The sequence spans 307 residues: Adenosylcobinamide-GDP ribazoletransferase (307 aa).

The next 8 membrane-spanning stretches (helical) occupy residues 22-42 (PLFE…VPGA), 58-78 (PFVG…IGPI), 80-100 (GVIH…WELL), 137-157 (FGLA…ASLV), 161-181 (VWWM…VTAL), 212-232 (TAAL…LTSV), 248-268 (AWLG…AALF), and 283-303 (CIGA…AVVA).

This sequence belongs to the CobS family. Mg(2+) is required as a cofactor.

The protein localises to the cell membrane. The enzyme catalyses alpha-ribazole + adenosylcob(III)inamide-GDP = adenosylcob(III)alamin + GMP + H(+). It catalyses the reaction alpha-ribazole 5'-phosphate + adenosylcob(III)inamide-GDP = adenosylcob(III)alamin 5'-phosphate + GMP + H(+). The protein operates within cofactor biosynthesis; adenosylcobalamin biosynthesis; adenosylcobalamin from cob(II)yrinate a,c-diamide: step 7/7. Joins adenosylcobinamide-GDP and alpha-ribazole to generate adenosylcobalamin (Ado-cobalamin). Also synthesizes adenosylcobalamin 5'-phosphate from adenosylcobinamide-GDP and alpha-ribazole 5'-phosphate. The protein is Adenosylcobinamide-GDP ribazoletransferase of Corynebacterium glutamicum (strain ATCC 13032 / DSM 20300 / JCM 1318 / BCRC 11384 / CCUG 27702 / LMG 3730 / NBRC 12168 / NCIMB 10025 / NRRL B-2784 / 534).